The primary structure comprises 161 residues: MPSFDVVSEANMIEVKNAIEQSNKEISTRFDFKGSDARVEQKERELTLFADDDFKLGQVKDVLIGKLAKRNVDVRFLDYGKVEKIGGDKVKQIVTVKKGVTGDLAKKIVRLVKDSKIKVQASIQGDAVRISGTKRDDLQSTIAMLRKDVTDTPLDFNNFRD.

This sequence belongs to the YajQ family.

Functionally, nucleotide-binding protein. The chain is Nucleotide-binding protein BceJ2315_27070 from Burkholderia cenocepacia (strain ATCC BAA-245 / DSM 16553 / LMG 16656 / NCTC 13227 / J2315 / CF5610) (Burkholderia cepacia (strain J2315)).